A 206-amino-acid chain; its full sequence is tRNA (guanine-N(7)-)-methyltransferase (206 aa).

S-adenosyl-L-methionine contacts are provided by glutamate 37, glutamate 62, aspartate 89, and aspartate 112. Aspartate 112 is an active-site residue. Residues lysine 116 and aspartate 148 each contribute to the substrate site.

It belongs to the class I-like SAM-binding methyltransferase superfamily. TrmB family.

It catalyses the reaction guanosine(46) in tRNA + S-adenosyl-L-methionine = N(7)-methylguanosine(46) in tRNA + S-adenosyl-L-homocysteine. The protein operates within tRNA modification; N(7)-methylguanine-tRNA biosynthesis. In terms of biological role, catalyzes the formation of N(7)-methylguanine at position 46 (m7G46) in tRNA. The polypeptide is tRNA (guanine-N(7)-)-methyltransferase (Myxococcus xanthus (strain DK1622)).